The following is a 106-amino-acid chain: Large ribosomal subunit protein eL42A (106 aa).

N6-methyllysine; by RKM3 is present on K40. K55 bears the N6-methyllysine; by RKM4 mark.

This sequence belongs to the eukaryotic ribosomal protein eL42 family. In terms of assembly, component of the large ribosomal subunit (LSU). Mature yeast ribosomes consist of a small (40S) and a large (60S) subunit. The 40S small subunit contains 1 molecule of ribosomal RNA (18S rRNA) and 33 different proteins (encoded by 57 genes). The large 60S subunit contains 3 rRNA molecules (25S, 5.8S and 5S rRNA) and 46 different proteins (encoded by 81 genes). In terms of processing, in wild-type cells, 78% of L42 is monomethylated at both Lys-40 and Lys-55, and 22% are a mixture of species with either residue monomethylated.

The protein resides in the cytoplasm. Component of the ribosome, a large ribonucleoprotein complex responsible for the synthesis of proteins in the cell. The small ribosomal subunit (SSU) binds messenger RNAs (mRNAs) and translates the encoded message by selecting cognate aminoacyl-transfer RNA (tRNA) molecules. The large subunit (LSU) contains the ribosomal catalytic site termed the peptidyl transferase center (PTC), which catalyzes the formation of peptide bonds, thereby polymerizing the amino acids delivered by tRNAs into a polypeptide chain. The nascent polypeptides leave the ribosome through a tunnel in the LSU and interact with protein factors that function in enzymatic processing, targeting, and the membrane insertion of nascent chains at the exit of the ribosomal tunnel. This Saccharomyces cerevisiae (strain ATCC 204508 / S288c) (Baker's yeast) protein is Large ribosomal subunit protein eL42A.